The following is a 266-amino-acid chain: Thymidylate synthase (266 aa).

Residues Arg-21 and 127 to 128 (RR) contribute to the dUMP site. Cys-147 acts as the Nucleophile in catalysis. Residues 168–171 (RSAD), Asn-179, and 209–211 (HIY) each bind dUMP. (6R)-5,10-methylene-5,6,7,8-tetrahydrofolate is bound at residue Asp-171. Ala-265 contributes to the (6R)-5,10-methylene-5,6,7,8-tetrahydrofolate binding site.

It belongs to the thymidylate synthase family. Bacterial-type ThyA subfamily. In terms of assembly, homodimer.

It localises to the cytoplasm. The catalysed reaction is dUMP + (6R)-5,10-methylene-5,6,7,8-tetrahydrofolate = 7,8-dihydrofolate + dTMP. It participates in pyrimidine metabolism; dTTP biosynthesis. Its function is as follows. Catalyzes the reductive methylation of 2'-deoxyuridine-5'-monophosphate (dUMP) to 2'-deoxythymidine-5'-monophosphate (dTMP) while utilizing 5,10-methylenetetrahydrofolate (mTHF) as the methyl donor and reductant in the reaction, yielding dihydrofolate (DHF) as a by-product. This enzymatic reaction provides an intracellular de novo source of dTMP, an essential precursor for DNA biosynthesis. The polypeptide is Thymidylate synthase (Brachyspira hyodysenteriae (strain ATCC 49526 / WA1)).